The chain runs to 351 residues: Formyl peptide receptor-related sequence 1 (351 aa).

Residues 1–27 (METNYSIPLNGSDVVIYDSTISRVLWI) lie on the Extracellular side of the membrane. Asn-4 and Asn-10 each carry an N-linked (GlcNAc...) asparagine glycan. A helical transmembrane segment spans residues 28–50 (LSMVVVSITFFLGVLGNGLVIWV). Residues 51–61 (AGFRMPHTVTT) lie on the Cytoplasmic side of the membrane. The chain crosses the membrane as a helical span at residues 62–83 (IWYLNLALADFSFTATLPFLLV). At 84 to 100 (EMAMKEKWPFGWFLCKL) the chain is on the extracellular side. Cys-98 and Cys-176 form a disulfide bridge. The helical transmembrane segment at 101–121 (VHIAVDVNLFGSVFLIAVIAL) threads the bilayer. The Cytoplasmic segment spans residues 122-140 (DRCICVLHPVWAQNHRTVS). Residues 141 to 162 (LARNVVVGSWIFALILTLPLFL) form a helical membrane-spanning segment. Residues 163-205 (FLTTVRDARGDVHCRLSFVSWGNSVEERLNTAITFVTTRGIIR) lie on the Extracellular side of the membrane. A helical transmembrane segment spans residues 206-226 (FIVSFSLPMSFVAICYGLITT). Topologically, residues 227–242 (KIHKKAFVNSSRPFRV) are cytoplasmic. A helical transmembrane segment spans residues 243–266 (LTGVVASFFICWFPFQLVALLGTV). Over 267-286 (WLKEMQFSGSYKIIGRLVNP) the chain is Extracellular. Residues 287-306 (TSSLAFFNSCLNPILYVFMG) traverse the membrane as a helical segment. Residues 307–351 (QDFQERLIHSLSSRLQRALSEDSGHISDTRTNLASLPEDIEIKAI) lie on the Cytoplasmic side of the membrane.

It belongs to the G-protein coupled receptor 1 family. Expressed exclusively in vomeronasal neurons. Expressed in 0.6 % of a subset of sensory neurons located in the basal layer of the vomeronasal organ. Each neuron appears to express only one receptor gene. Expressed mostly in neutrophils, followed by spleen and lung and expressed at very low levels in heart and liver.

It localises to the cell membrane. Functionally, low affinity receptor for N-formyl-methionyl peptides. Receptor for lipoxin A4. May have an olfactory function associated with the identification of pathogens or of pathogenic states. The protein is Formyl peptide receptor-related sequence 1 (Fpr-s1) of Mus musculus (Mouse).